The chain runs to 126 residues: Large ribosomal subunit protein bL20 (126 aa).

It belongs to the bacterial ribosomal protein bL20 family.

Functionally, binds directly to 23S ribosomal RNA and is necessary for the in vitro assembly process of the 50S ribosomal subunit. It is not involved in the protein synthesizing functions of that subunit. In Nocardia farcinica (strain IFM 10152), this protein is Large ribosomal subunit protein bL20.